Consider the following 457-residue polypeptide: F-box/LRR-repeat protein At2g42730 (457 aa).

The F-box domain maps to 4–50; it reads KDVISRLPDEVLGRILSLISTKEAVSTSVLSKRWKNMFVLVSNLDID. LRR repeat units lie at residues 265-288, 292-315, and 318-343; these read MDET…MRNL, IRNV…CKEM, and FDSL…LIKN.

The protein is F-box/LRR-repeat protein At2g42730 of Arabidopsis thaliana (Mouse-ear cress).